A 149-amino-acid polypeptide reads, in one-letter code: Glycophorin-A (149 aa).

Positions methionine 1 to alanine 19 are cleaved as a signal peptide. At serine 20–glutamate 90 the chain is on the extracellular side. Serine 21 carries O-linked (GalNAc...) serine glycosylation. O-linked (GalNAc...) threonine glycosylation is found at threonine 22, threonine 23, and threonine 29. Residue serine 30 is glycosylated (O-linked (GalNAc...) serine). The O-linked (GalNAc...) threonine glycan is linked to threonine 31. The O-linked (GalNAc...) serine glycan is linked to serine 32. Threonine 35 carries O-linked (GalNAc...) threonine glycosylation. Serine 37 and serine 40 each carry an O-linked (GalNAc...) serine glycan. Threonine 43 carries an O-linked (GalNAc...) threonine glycan. O-linked (GalNAc...) serine glycosylation occurs at serine 44. O-linked (GalNAc...) threonine glycosylation is found at threonine 51 and threonine 55. O-linked (GalNAc...) serine glycosylation is present at serine 62. O-linked (GalNAc...) threonine glycosylation is present at threonine 68. Residues isoleucine 91–isoleucine 113 traverse the membrane as a helical segment. Over arginine 114–glutamine 149 the chain is Cytoplasmic. The segment at serine 122–glutamine 149 is disordered. Phosphoserine occurs at positions 137 and 147.

The protein belongs to the glycophorin-A family. In terms of assembly, homodimer. Component of the ankyrin-1 complex in the erythrocyte, composed of ANK1, RHCE, RHAG, SLC4A1, EPB42, GYPA, GYPB and AQP1. Interacts with SLC4A1; a GYPA monomer is bound at each end of the SLC4A1 dimer forming a heterotetramer.

It is found in the cell membrane. In terms of biological role, component of the ankyrin-1 complex, a multiprotein complex involved in the stability and shape of the erythrocyte membrane. Glycophorin A is the major intrinsic membrane protein of the erythrocyte. The N-terminal glycosylated segment, which lies outside the erythrocyte membrane, has MN blood group receptors. Appears to be important for the function of SLC4A1 and is required for high activity of SLC4A1. May be involved in translocation of SLC4A1 to the plasma membrane. In Pan troglodytes (Chimpanzee), this protein is Glycophorin-A.